Consider the following 199-residue polypeptide: VAMP-like protein YKT62 (199 aa).

In terms of domain architecture, Longin spans L7 to F131. In terms of domain architecture, v-SNARE coiled-coil homology spans K139–L199. C195 is lipidated: S-palmitoyl cysteine. C196 carries the cysteine methyl ester modification. A lipid anchor (S-geranylgeranyl cysteine) is attached at C196. The propeptide at T197 to L199 is removed in mature form.

This sequence belongs to the synaptobrevin family. Interacts with SYP41. Core constituent of the SNARE complex required for membrane fusion at the trans-Golgi network.

The protein localises to the cell membrane. Functionally, involved in the secretory pathway. Essential for membrane fusion mediated by either SYP41 or SYP61; triggers the fusion of phospholipid vesicles containing SYP41 or SYP61 and VTI12. The polypeptide is VAMP-like protein YKT62 (Arabidopsis thaliana (Mouse-ear cress)).